Reading from the N-terminus, the 494-residue chain is DUF21 domain-containing protein At4g14240 (494 aa).

At 1-43 (MHLINAVAAARILSGIGQSNGNNGGEAIPFGSFEWITYAGISC) the chain is on the extracellular side. Positions 31–213 (GSFEWITYAG…GKGGELTHDE (183 aa)) constitute a CNNM transmembrane domain. The chain crosses the membrane as a helical span at residues 44 to 64 (FLVLFAGIMSGLTLGLMSLGL). The Cytoplasmic segment spans residues 65 to 93 (VELEILQRSGTPNEKKQAAAIFPVVQKQH). A helical transmembrane segment spans residues 94 to 114 (QLLVTLLLCNAMAMEGLPIYL). Residues 115–121 (DKLFNEY) lie on the Extracellular side of the membrane. The helical transmembrane segment at 122-142 (VAIILSVTFVLAFGEVIPQAI) threads the bilayer. Topologically, residues 143 to 159 (CTRYGLAVGANFVWLVR) are cytoplasmic. Residues 160–180 (ILMTLCYPIAFPIGKILDLVL) form a helical membrane-spanning segment. Over 181–494 (GHNDALFRRA…TITEPIRRNN (314 aa)) the chain is Extracellular. CBS domains are found at residues 232–292 (MTPI…TETL), 297–352 (CIRR…SNDS), and 364–425 (GNHD…IVDE). Asparagine 350 and asparagine 385 each carry an N-linked (GlcNAc...) asparagine glycan. The interval 459–494 (QKGTGGQNKQGQTNKVPGQEQDKMLGTITEPIRRNN) is disordered.

Its subcellular location is the membrane. The protein is DUF21 domain-containing protein At4g14240 (CBSDUF1) of Arabidopsis thaliana (Mouse-ear cress).